The chain runs to 301 residues: GTP cyclohydrolase FolE2 (301 aa).

Belongs to the GTP cyclohydrolase IV family.

The enzyme catalyses GTP + H2O = 7,8-dihydroneopterin 3'-triphosphate + formate + H(+). It participates in cofactor biosynthesis; 7,8-dihydroneopterin triphosphate biosynthesis; 7,8-dihydroneopterin triphosphate from GTP: step 1/1. Functionally, converts GTP to 7,8-dihydroneopterin triphosphate. This is GTP cyclohydrolase FolE2 from Exiguobacterium sibiricum (strain DSM 17290 / CCUG 55495 / CIP 109462 / JCM 13490 / 255-15).